We begin with the raw amino-acid sequence, 441 residues long: Serine/threonine-protein phosphatase 2A activator 1 (441 aa).

Composition is skewed to polar residues over residues 66-75 (NIPPSNTTHS) and 421-432 (QRQDDLNSTTYR). 2 disordered regions span residues 66–100 (NIPPSNTTHSRPLDLPPPQGEEEGDKCNISHSSNQ) and 421–441 (QRQDDLNSTTYRGRQPRLGRN).

This sequence belongs to the PTPA-type PPIase family.

The protein localises to the cytoplasm. Its subcellular location is the nucleus. It catalyses the reaction [protein]-peptidylproline (omega=180) = [protein]-peptidylproline (omega=0). Functionally, PPIases accelerate the folding of proteins. It catalyzes the cis-trans isomerization of proline imidic peptide bonds in oligopeptides. Acts as a regulatory subunit for PP2A-like phosphatases modulating their activity or substrate specificity, probably by inducing a conformational change in the catalytic subunit, a direct target of the PPIase. Can reactivate inactive phosphatase PP2A-phosphatase methylesterase complexes (PP2Ai) in presence of ATP and Mg(2+) by dissociating the inactive form from the complex. The protein is Serine/threonine-protein phosphatase 2A activator 1 (RRD1) of Debaryomyces hansenii (strain ATCC 36239 / CBS 767 / BCRC 21394 / JCM 1990 / NBRC 0083 / IGC 2968) (Yeast).